A 147-amino-acid chain; its full sequence is Ponticulin-like protein C2 (147 aa).

The signal sequence occupies residues 1-20 (MKFTKPLLLLIVAIIASSNA). Asn118 carries GPI-like-anchor amidated asparagine lipidation. N-linked (GlcNAc...) asparagine glycosylation is present at Asn118. Positions 119–147 (SSESDSSDSTRIGASFALFALALLSMLAL) are cleaved as a propeptide — removed in mature form.

The protein belongs to the ponticulin family. Post-translationally, the GPI-like-anchor contains a phosphoceramide group, rather than a phosphatidyl group.

It localises to the cell membrane. This Dictyostelium discoideum (Social amoeba) protein is Ponticulin-like protein C2 (ponC2).